Reading from the N-terminus, the 353-residue chain is Uroporphyrinogen decarboxylase (353 aa).

Residues 27–31 (RQAGR), Phe-46, Asp-76, Tyr-152, Ser-207, and His-321 each bind substrate.

Belongs to the uroporphyrinogen decarboxylase family. Homodimer.

Its subcellular location is the cytoplasm. The catalysed reaction is uroporphyrinogen III + 4 H(+) = coproporphyrinogen III + 4 CO2. The protein operates within porphyrin-containing compound metabolism; protoporphyrin-IX biosynthesis; coproporphyrinogen-III from 5-aminolevulinate: step 4/4. In terms of biological role, catalyzes the decarboxylation of four acetate groups of uroporphyrinogen-III to yield coproporphyrinogen-III. The sequence is that of Uroporphyrinogen decarboxylase from Listeria monocytogenes serovar 1/2a (strain ATCC BAA-679 / EGD-e).